We begin with the raw amino-acid sequence, 286 residues long: Urease accessory protein UreD 2 (286 aa).

It belongs to the UreD family. In terms of assembly, ureD, UreF and UreG form a complex that acts as a GTP-hydrolysis-dependent molecular chaperone, activating the urease apoprotein by helping to assemble the nickel containing metallocenter of UreC. The UreE protein probably delivers the nickel.

The protein resides in the cytoplasm. Required for maturation of urease via the functional incorporation of the urease nickel metallocenter. This chain is Urease accessory protein UreD 2, found in Bradyrhizobium sp. (strain ORS 278).